Here is a 498-residue protein sequence, read N- to C-terminus: Elastase (498 aa).

Positions 1–23 (MKKVSTLDLLFVAIMGVSPAAFA) are cleaved as a signal peptide. The propeptide occupies 24 to 197 (ADLIDVSKLP…VLDQWEGLAH (174 aa)). A disulfide bond links C227 and C255. T236 is modified (phosphothreonine). A Ca(2+)-binding site is contributed by D333. H337 provides a ligand contact to Zn(2+). E338 is a catalytic residue. Positions 341 and 361 each coordinate Zn(2+). Ca(2+)-binding residues include E369, E372, D380, and L382. H420 acts as the Proton donor in catalysis. Cysteines 467 and 494 form a disulfide.

The protein belongs to the peptidase M4 family. The cofactor is Ca(2+). Zn(2+) serves as cofactor. In terms of processing, made as a pre-pro-protein which is exported to the periplasm. Probably autocatalyzes cleavage of its pro-peptide. The pro-peptide can be secreted with mature elastase.

The protein resides in the secreted. It catalyses the reaction Hydrolysis of proteins including elastin, collagen types III and IV, fibronectin and immunoglobulin A, generally with bulky hydrophobic group at P1'. Insulin B chain cleavage pattern identical to that of thermolysin, but specificity differs in other respects.. Cleaves host elastase, collagen, IgI and several complement components as well as endogenous pro-aminopeptidase, pro-chitin-binding protein (cbpD). Cleaves its own pro-peptide. Involved in the pathogenesis of P.aeruginosa infections. This is Elastase (lasB) from Pseudomonas aeruginosa (strain UCBPP-PA14).